Here is a 470-residue protein sequence, read N- to C-terminus: TNF receptor-associated factor 4 (470 aa).

The RING-type zinc finger occupies 18–58 (CPLCGKPMREPVQVSTCGHRFCDTCLQEFLSEGVFKCPEDQ). 3 TRAF-type zinc fingers span residues 102–154 (HLNT…EAYE), 155–208 (SHEG…DTIQ), and 209–266 (SHQY…KLAM). Residue K263 forms a Glycyl lysine isopeptide (Lys-Gly) (interchain with G-Cter in ubiquitin) linkage. The stretch at 277–309 (HLAMMCALVSRQRQELQELRRELEELSVGSDGV) forms a coiled coil. The 156-residue stretch at 307 to 462 (DGVLIWKIGS…DDAVFIRAAV (156 aa)) folds into the MATH domain. Residue S426 is modified to Phosphoserine.

Belongs to the TNF receptor-associated factor family. B subfamily. As to quaternary structure, homotrimer. Interacts with LTBR/TNFRSF3, NGFR/TNFRSF16, RPS6KB1 and TGFB1I1. Interacts with SMURF1. Interacts (via TRAF domain) with MAP3K4 (via kinase domain). Interacts with NCF1, TICAM1, IRAK1 and TRAF6, and is probably part of a complex containing TRAF4, NCF1, TICAM1, IRAK1 and TRAF6. Interacts (via MATH domain) with GP6 and GP1BB. Interacts with EGFR (via C-terminal region); this interaction promotes the formation of EGFR asymmetric dimers. Interacts with PKM; this interaction promotes PKM kinase activity. Polyubiquitinated, leading to its proteasomal degradation. Ubiquitinated at Lys-263 by the SCF(FBXL2) complex, leading to its degradation by the proteasome. Expressed in epithelial cells of thymus, dendritic cells of lymph node, and in the basal cell layer of epithelia such as epidermis, nasopharynx, respiratory tract, salivary gland, and esophagus.

It localises to the cytoplasm. It is found in the nucleus. The protein localises to the perinuclear region. The protein resides in the cell junction. Its subcellular location is the tight junction. It localises to the cell membrane. It is found in the cytoskeleton. It carries out the reaction S-ubiquitinyl-[E2 ubiquitin-conjugating enzyme]-L-cysteine + [acceptor protein]-L-lysine = [E2 ubiquitin-conjugating enzyme]-L-cysteine + N(6)-ubiquitinyl-[acceptor protein]-L-lysine.. The protein operates within protein degradation; proteasomal ubiquitin-dependent pathway. Its function is as follows. Adapter protein with E3 ligase activity that is involved in many diverse biological processes including cell proliferation, migration, differentiation, DNA repair, platelet activation or apoptosis. Promotes EGFR-mediated signaling by facilitating the dimerization of EGFR and downstream AKT activation thereby promoting cell proliferation. Ubiquitinates SMURF2 through 'Lys-48'-linked ubiquitin chain leading to SMURF2 degradation through the proteasome and subsequently osteogenic differentiation. Promotes 'Lys-63'-mediated ubiquitination of CHK1 which in turn activates cell cycle arrest and activation of DNA repair. In addition, promotes an atypical 'Lys-29'-linked ubiquitination at the C-terminal end of IRS1 which is crucial for insulin-like growth factor (IGF) signal transduction. Regulates activation of NF-kappa-B in response to signaling through Toll-like receptors. Required for normal skeleton development, and for normal development of the respiratory tract. Required for activation of RPS6KB1 in response to TNF signaling. Modulates TRAF6 functions. Inhibits adipogenic differentiation by activating pyruvate kinase PKM activity and subsequently the beta-catenin signaling pathway. In Homo sapiens (Human), this protein is TNF receptor-associated factor 4 (TRAF4).